We begin with the raw amino-acid sequence, 633 residues long: Extracellular metalloproteinase 5 (633 aa).

The signal sequence occupies residues Met-1–His-21. Residues Pro-22–Ala-245 constitute a propeptide that is removed on maturation. Asn-285 is a glycosylation site (N-linked (GlcNAc...) asparagine). A Zn(2+)-binding site is contributed by His-428. Glu-429 is an active-site residue. Position 432 (His-432) interacts with Zn(2+). N-linked (GlcNAc...) asparagine glycosylation is found at Asn-592 and Asn-621.

This sequence belongs to the peptidase M36 family. It depends on Zn(2+) as a cofactor.

Its subcellular location is the secreted. In terms of biological role, secreted metalloproteinase probably acting as a virulence factor. In Trichophyton rubrum (Athlete's foot fungus), this protein is Extracellular metalloproteinase 5 (MEP5).